The chain runs to 136 residues: NADH-ubiquinone oxidoreductase chain 3 (136 aa).

3 helical membrane passes run 5-25 (TFFL…NLIF), 55-75 (ISFF…LLVY), and 85-105 (GIYG…GFAF).

It belongs to the complex I subunit 3 family.

It localises to the mitochondrion membrane. The catalysed reaction is a ubiquinone + NADH + 5 H(+)(in) = a ubiquinol + NAD(+) + 4 H(+)(out). Core subunit of the mitochondrial membrane respiratory chain NADH dehydrogenase (Complex I) that is believed to belong to the minimal assembly required for catalysis. Complex I functions in the transfer of electrons from NADH to the respiratory chain. The immediate electron acceptor for the enzyme is believed to be ubiquinone. In Emericella nidulans (Aspergillus nidulans), this protein is NADH-ubiquinone oxidoreductase chain 3 (nd3).